The sequence spans 366 residues: Putative RING-H2 finger protein ATL21C (366 aa).

An N-terminal signal peptide occupies residues 1–23 (MTFSKQLFPFVFFLLFLVSLRHA). The chain crosses the membrane as a helical span at residues 243-263 (LVLVISLSAVTVFVFPTCIAI). The segment at 320–362 (CPICLSEYASKETVRFIPECDHCFHVECIDVWLKIHGSCPLCR) adopts an RING-type; atypical zinc-finger fold.

This sequence belongs to the RING-type zinc finger family. ATL subfamily.

It localises to the membrane. The enzyme catalyses S-ubiquitinyl-[E2 ubiquitin-conjugating enzyme]-L-cysteine + [acceptor protein]-L-lysine = [E2 ubiquitin-conjugating enzyme]-L-cysteine + N(6)-ubiquitinyl-[acceptor protein]-L-lysine.. It participates in protein modification; protein ubiquitination. The polypeptide is Putative RING-H2 finger protein ATL21C (ATL21C) (Arabidopsis thaliana (Mouse-ear cress)).